The primary structure comprises 659 residues: MFEIKAKDNRGRVGVLKTNSGDVKTPNLMPVIHPRKQTIDVKKYGADIVITNAYLIYKDEDLKKKAAEIGLHKLINFDGPIMTDSGSFQLSVYGDVDITNKEVIEFQELIKTDIGTSLDIPTAPFVTREKAEADLEVTLERAKEAVDYRNSQNMEMKLNSVVQGSTFPDLRRKCADELTKLDADLYPIGAVVPLMESYHYKELVDVVMNSVAHLPDSKPRHLMGAGHPMIFALAVAMGCDLFDSAAYILYAEDDRLLSVRGTYKLENLQEMPCSCEVCCNYTPDDLRAMPKEKRRDLIAQHNLNVSFAELRLIRQAIYEGSLMELVEERCRAHPNLLEALRQLGNYSKDLEKYDPRSKKSAFFYTGSESLYRSEVLRHIQKLRAMPRKRDLVILPPSRKPYSKYVSSKLGNFYVYGSEQELDLNNTDFMVLDIPFGLIPLEIDEIYPLSQNESPRTWDVSSLEFIEDFISEFVEYYDQVLIHSNVIKKLDIGLYNIHSQSDEIRYAKDDLKKVKAIADYQFGVGAGDALFAGNIKIEKSKKTGKIRHIYDGKTLIVNMRASDSFLILSKEGAKRLHAATQYPKNRVVVNKDSEPFSLEGKSVFAKFVVECDEDIRAKDEVLIVNEEDKLLAYGKALLGACEINDFQTGQAIKTRKGMKK.

Catalysis depends on aspartate 84, which acts as the Nucleophile. 2 residues coordinate substrate: aspartate 119 and alanine 190. Positions 273, 275, and 278 each coordinate Zn(2+). One can recognise a PUA domain in the interval 583-658 (KNRVVVNKDS…QAIKTRKGMK (76 aa)).

This sequence belongs to the archaeosine tRNA-ribosyltransferase family. The cofactor is Zn(2+).

The catalysed reaction is guanosine(15) in tRNA + 7-cyano-7-deazaguanine = 7-cyano-7-carbaguanosine(15) in tRNA + guanine. The protein operates within tRNA modification; archaeosine-tRNA biosynthesis. In terms of biological role, exchanges the guanine residue with 7-cyano-7-deazaguanine (preQ0) at position 15 in the dihydrouridine loop (D-loop) of archaeal tRNAs. The chain is tRNA-guanine(15) transglycosylase from Methanobrevibacter smithii (strain ATCC 35061 / DSM 861 / OCM 144 / PS).